We begin with the raw amino-acid sequence, 449 residues long: Adenosylhomocysteinase (449 aa).

Serine 2 is subject to N-acetylserine. Lysine 21 participates in a covalent cross-link: Glycyl lysine isopeptide (Lys-Gly) (interchain with G-Cter in ubiquitin). Substrate contacts are provided by threonine 58, aspartate 134, and glutamate 159. 160 to 162 is a binding site for NAD(+); that stretch reads TTT. Substrate contacts are provided by lysine 189 and aspartate 193. NAD(+) is bound by residues asparagine 194, 223 to 228, glutamate 246, 302 to 304, and asparagine 349; these read GYGDVG and IGH. At threonine 393 the chain carries Phosphothreonine. Lysine 413 is covalently cross-linked (Glycyl lysine isopeptide (Lys-Gly) (interchain with G-Cter in ubiquitin)).

This sequence belongs to the adenosylhomocysteinase family. It depends on NAD(+) as a cofactor.

It catalyses the reaction S-adenosyl-L-homocysteine + H2O = L-homocysteine + adenosine. It participates in amino-acid biosynthesis; L-homocysteine biosynthesis; L-homocysteine from S-adenosyl-L-homocysteine: step 1/1. Adenosylhomocysteine is a competitive inhibitor of S-adenosyl-L-methionine-dependent methyl transferase reactions; therefore adenosylhomocysteinase may play a key role in the control of methylations via regulation of the intracellular concentration of adenosylhomocysteine. The chain is Adenosylhomocysteinase (SAH1) from Saccharomyces cerevisiae (strain ATCC 204508 / S288c) (Baker's yeast).